We begin with the raw amino-acid sequence, 220 residues long: Adenylate kinase (220 aa).

10–15 (GAGKGT) serves as a coordination point for ATP. An NMP region spans residues 30 to 59 (STGDMLRAAVKAGSPLGVEAKGYMDAGKLV). AMP is bound by residues Thr-31, Arg-36, 57–59 (KLV), 85–88 (GFPR), and Gln-92. Positions 122-159 (GRRTHPASGRTYHVKFNPPKVEGKDDVTGEPLIQRDDD) are LID. Residues Arg-123 and 132-133 (TY) each bind ATP. Residues Arg-156 and Arg-167 each contribute to the AMP site. Gly-206 contributes to the ATP binding site.

The protein belongs to the adenylate kinase family. Monomer.

It is found in the cytoplasm. The enzyme catalyses AMP + ATP = 2 ADP. The protein operates within purine metabolism; AMP biosynthesis via salvage pathway; AMP from ADP: step 1/1. Functionally, catalyzes the reversible transfer of the terminal phosphate group between ATP and AMP. Plays an important role in cellular energy homeostasis and in adenine nucleotide metabolism. This is Adenylate kinase from Burkholderia ambifaria (strain ATCC BAA-244 / DSM 16087 / CCUG 44356 / LMG 19182 / AMMD) (Burkholderia cepacia (strain AMMD)).